The sequence spans 225 residues: Suppressor of cytokine signaling 3 (225 aa).

Residues 22–33 (LKTFSSKSEYQL) are kinase inhibitory region (KIR). An extended SH2 subdomain (ESS) region spans residues 34–45 (VVNAVRKLQESG). In terms of domain architecture, SH2 spans 46–142 (FYWSAVTGGE…APSFSLPPTE (97 aa)). Residues 141–160 (TEPSFEVQEQPPAQALPGGT) are disordered. Positions 177–224 (VLSRPLSSNVATLQHLCRKTVNGHLDSYEKVTQLPGPIREFLDQYDAP) constitute an SOCS box domain.

As to quaternary structure, interacts with multiple activated proteins of the tyrosine kinase signaling pathway including IGF1 receptor, insulin receptor and JAK2. Binding to JAK2 is mediated through the KIR and SH2 domains to a phosphorylated tyrosine residue within the JAK2 JH1 domain. Binds specific activated tyrosine residues of the leptin, EPO, IL12, GSCF and gp130 receptors. Interaction with CSNK1E stabilize SOCS3 protein. Component of the probable ECS(SOCS3) E3 ubiquitin-protein ligase complex which contains CUL5, RNF7/RBX2, Elongin BC complex and SOCS3. Interacts with CUL5, RNF7, ELOB and ELOC. Interacts with FGFR3. Interacts with INSR. Interacts with BCL10; this interaction may interfere with BCL10-binding with PELI2. Interacts with NOD2 (via CARD domain); the interaction promotes NOD2 degradation. Post-translationally, phosphorylated on tyrosine residues after stimulation by the cytokines, IL-2, EPO or IGF1.

Its pathway is protein modification; protein ubiquitination. SOCS family proteins form part of a classical negative feedback system that regulates cytokine signal transduction. SOCS3 is involved in negative regulation of cytokines that signal through the JAK/STAT pathway. Inhibits cytokine signal transduction by binding to tyrosine kinase receptors including IL6ST/gp130, LIF, erythropoietin, insulin, IL12, GCSF and leptin receptors. Binding to JAK2 inhibits its kinase activity and regulates IL6 signaling. Suppresses fetal liver erythropoiesis. Regulates onset and maintenance of allergic responses mediated by T-helper type 2 cells. Probable substrate recognition component of a SCF-like ECS (Elongin BC-CUL2/5-SOCS-box protein) E3 ubiquitin-protein ligase complex which mediates the ubiquitination and subsequent proteasomal degradation of target proteins. The protein is Suppressor of cytokine signaling 3 of Rattus norvegicus (Rat).